The sequence spans 726 residues: Myb-like protein Z (726 aa).

4 disordered regions span residues 15–109 (DSND…SLSN), 124–149 (ASPSKSSENSPTIHTSSLSPNSYHPY), 161–239 (HYVS…TKQQ), and 272–303 (LIPSSPTRSPSGGSGSESEENDGESSPNNMRS). Positions 18–39 (DNNNNNNNNNNSNNNNNNNNNN) are enriched in low complexity. Polar residues predominate over residues 45–80 (SSATSSPTGQDSTIDRPNSPSSSIKFTYPSKNSIVT). The segment covering 81-108 (SPSSLQLPSPSFSSSSSSSSSSSSSSLS) has biased composition (low complexity). A compositionally biased stretch (polar residues) spans 124–147 (ASPSKSSENSPTIHTSSLSPNSYH). Positions 165–177 (NNNNNNNNNNNNN) are enriched in low complexity. Polar residues predominate over residues 183–209 (SSELYNTSPSISSKTTPNGSSTNNSPF). Positions 221 to 239 (NNNNNNNNDRNENNTTKQQ) are enriched in low complexity. The Myb-like domain occupies 329-388 (IPIATRKLWSQEECCRLLEMVFQRDPQSVTSKESELRWRSIASTLGRTVTSTRKKYMRLM). Residues 516 to 651 (KQIQQQQKQK…NNNYRSSLSP (136 aa)) are compositionally biased toward low complexity. A disordered region spans residues 516–726 (KQIQQQQKQK…NNNNYNNYHN (211 aa)). Positions 661–675 (QSPQQKSNNENQQNF) are enriched in polar residues. Low complexity predominate over residues 709 to 726 (NLNNNNNNNNNNYNNYHN).

This is Myb-like protein Z (mybZ) from Dictyostelium discoideum (Social amoeba).